Reading from the N-terminus, the 376-residue chain is uncharacterized protein (376 aa).

Low complexity-rich tracts occupy residues 73 to 99 (NNSI…NNNN) and 228 to 243 (SSFS…TVSS). Disordered stretches follow at residues 73–100 (NNSI…NNNL) and 222–269 (EQDP…KISD).

This is an uncharacterized protein from Saccharomyces cerevisiae (strain ATCC 204508 / S288c) (Baker's yeast).